The primary structure comprises 236 residues: Rho-related GTP-binding protein RhoV (236 aa).

The segment at 1–28 (MPPRELSEAEPPPLPASTPPPRRRSAPP) is disordered. Over residues 10 to 20 (EPPPLPASTPP) the composition is skewed to pro residues. The residue at position 25 (S25) is a Phosphoserine. Residues 38-45 (GDGAVGKS), 85-89 (DTAGQ), and 143-146 (TQAD) contribute to the GTP site. A lipid anchor (S-palmitoyl cysteine) is attached at C234.

The protein belongs to the small GTPase superfamily. Rho family. Interacts with PAK2. Requires Mg(2+) as cofactor. Highly expressed in brain and testis and at lower levels in spleen and lung.

The protein resides in the cell membrane. It localises to the endosome membrane. Its function is as follows. Plays a role in the control of the actin cytoskeleton via activation of the JNK pathway. The polypeptide is Rho-related GTP-binding protein RhoV (Rattus norvegicus (Rat)).